A 392-amino-acid polypeptide reads, in one-letter code: Zinc finger protein CONSTANS-LIKE 7 (392 aa).

Residues cysteine 22, cysteine 25, cysteine 46, and histidine 51 each contribute to the Zn(2+) site. The segment at 22–65 (CDACMKRSRASWYCPADDAFLCQSCDASIHSANHLAKRHERVRL) adopts a B box-type; atypical zinc-finger fold. Residues 226 to 254 (KEENKVGFEINCKDLKRVKDEDEEEEEAK) are a coiled coil. Disordered stretches follow at residues 246–271 (EDEE…SNDK) and 326–346 (SDGS…GERE). Basic and acidic residues predominate over residues 259–271 (GSKDSDREASNDK). Residues 345-387 (REARVLRYKEKRRTRLFSKKIRYEVRKLNAEQRPRIKGRFVKR) form the CCT domain.

Belongs to the CONSTANS family.

It localises to the nucleus. This is Zinc finger protein CONSTANS-LIKE 7 (COL7) from Arabidopsis thaliana (Mouse-ear cress).